The primary structure comprises 313 residues: Olfactory receptor 4M2 (313 aa).

Residues 1-25 are Cytoplasmic-facing; the sequence is METANYTKVTEFVLTGLSQTPEVQL. Residues 26 to 46 form a helical membrane-spanning segment; sequence VLFVIFLSFYLFILPGNILII. The Extracellular portion of the chain corresponds to 47 to 57; sequence CTISLDPHLTS. Residues 58 to 78 form a helical membrane-spanning segment; it reads PMYFLLANLAFLDIWYSSITA. The Cytoplasmic portion of the chain corresponds to 79–97; sequence PEMLIDFFVERKIISFDEC. A disulfide bridge links cysteine 97 with cysteine 179. A helical membrane pass occupies residues 98–118; the sequence is IAQLFFLHFAGASEMFLLTVM. Residues 119-142 lie on the Extracellular side of the membrane; sequence AFDLYTAICRPLHYATIMNQRLCC. Residues 143-163 form a helical membrane-spanning segment; sequence ILVALSWRGGFIHSIIQVALI. Over 164 to 204 the chain is Cytoplasmic; it reads VRLPFCGPNELDSYFCDITQVVRIACANTFPEELVMICSSG. A helical transmembrane segment spans residues 205–225; it reads LISVVCLIALLMSYAFLLALL. The Extracellular segment spans residues 226–238; sequence KKLSGSGENTNRA. The chain crosses the membrane as a helical span at residues 239–259; sequence VSTCYSHITIVVLMFGPSIYI. The Cytoplasmic portion of the chain corresponds to 260 to 270; sequence YARPFDSFSLD. A helical membrane pass occupies residues 271 to 291; the sequence is KVVSVFNTLIFPLHNPIIYTL. Topologically, residues 292-313 are extracellular; that stretch reads RNKEVKAAMRKLVTKYILCKEK.

It belongs to the G-protein coupled receptor 1 family.

It localises to the membrane. Functionally, odorant receptor. This chain is Olfactory receptor 4M2, found in Homo sapiens (Human).